Here is a 218-residue protein sequence, read N- to C-terminus: Small ribosomal subunit protein uS3c (218 aa).

Residues 47-118 form the KH type-2 domain; that stretch reads VQKNIRISSG…KLNIAITRIS (72 aa).

Belongs to the universal ribosomal protein uS3 family. As to quaternary structure, part of the 30S ribosomal subunit.

It localises to the plastid. Its subcellular location is the chloroplast. In Aethionema cordifolium (Lebanon stonecress), this protein is Small ribosomal subunit protein uS3c (rps3).